We begin with the raw amino-acid sequence, 545 residues long: CTP synthase (545 aa).

Positions 1-265 (MSKYIFVTGG…LVPIAKQLDL (265 aa)) are amidoligase domain. Serine 13 contacts CTP. Serine 13 lines the UTP pocket. ATP is bound by residues 14–19 (SLGKGI) and aspartate 71. Mg(2+)-binding residues include aspartate 71 and glutamate 139. CTP is bound by residues 146–148 (DIE), 186–191 (KTKPTQ), and lysine 222. UTP contacts are provided by residues 186 to 191 (KTKPTQ) and lysine 222. The Glutamine amidotransferase type-1 domain occupies 290-544 (KIAFVGKYLQ…VENAYKCQRS (255 aa)). Glycine 355 is an L-glutamine binding site. Cysteine 382 (nucleophile; for glutamine hydrolysis) is an active-site residue. L-glutamine-binding positions include 383-386 (LGMQ), glutamate 406, and arginine 473. Active-site residues include histidine 517 and glutamate 519.

Belongs to the CTP synthase family. Homotetramer.

It catalyses the reaction UTP + L-glutamine + ATP + H2O = CTP + L-glutamate + ADP + phosphate + 2 H(+). It carries out the reaction L-glutamine + H2O = L-glutamate + NH4(+). The catalysed reaction is UTP + NH4(+) + ATP = CTP + ADP + phosphate + 2 H(+). It participates in pyrimidine metabolism; CTP biosynthesis via de novo pathway; CTP from UDP: step 2/2. Allosterically activated by GTP, when glutamine is the substrate; GTP has no effect on the reaction when ammonia is the substrate. The allosteric effector GTP functions by stabilizing the protein conformation that binds the tetrahedral intermediate(s) formed during glutamine hydrolysis. Inhibited by the product CTP, via allosteric rather than competitive inhibition. Catalyzes the ATP-dependent amination of UTP to CTP with either L-glutamine or ammonia as the source of nitrogen. Regulates intracellular CTP levels through interactions with the four ribonucleotide triphosphates. This Nautilia profundicola (strain ATCC BAA-1463 / DSM 18972 / AmH) protein is CTP synthase.